The sequence spans 349 residues: tRNA pseudouridine synthase D (349 aa).

Residue phenylalanine 27 coordinates substrate. The Nucleophile role is filled by aspartate 80. Asparagine 129 provides a ligand contact to substrate. The 149-residue stretch at glycine 155–leucine 303 folds into the TRUD domain. Residue phenylalanine 329 coordinates substrate.

The protein belongs to the pseudouridine synthase TruD family.

It carries out the reaction uridine(13) in tRNA = pseudouridine(13) in tRNA. In terms of biological role, responsible for synthesis of pseudouridine from uracil-13 in transfer RNAs. The protein is tRNA pseudouridine synthase D of Shigella flexneri.